A 742-amino-acid polypeptide reads, in one-letter code: MAERRVSNGEEVVINVSDKEDSKDPRASPSFNPLASPDSDAGIEKSKPVPPISIPTPEIYKFSGSVHKPPKIPSPEGLVRRKSLSRSIYSKPKSRFGEQQSFRYDSTREENGGRSLREQFGAGSFARGSFDRASPNNKSNRSVASAALSKVAEEEPDENEEIYKKVKLHRVKRSGMKPLAFLELVVFMAILGALIVSLTIDVVNKHTIWGLEFWKWCVLVMVTLSGMLVTNWFMHFVVFIIEKNYLLRKKVLYFVHGLKKNVQVFIWFSLVLIAWICLFDGDVKRTRKTKRFLDFITWTIVSLLVGSILFLVKTFALKVLASKFNVRNFFERIQESVFHQYVLQTLSGPPLIEEAENVGRVPSTGHLSFTRTKDGKVKDKKVIDMGKVHRMKQEKVSAWTMRVLIEAVGTSGISTISSTLDEVNNKKERTDKEITNEMEAVAAAYDVFNNVAKPNHNYIEEDDLLRFMIKEEVDLVLPLIEDADTGKITRKTFTEWVVNVYTSRKTIGHSLNDTKTAVKQLDKLITGILTVITFIVWMVLLDIASTKLLLVFSSQFLGLAFMIGSTCKNIFESFMFVFVMHPYDVGDRCVVDGVMLLVEEIDLLTTVFLKIDNEKVFYPNSVLISKPISNFYRSPDMGDYVDFGIAFSTPAEKIGCLKGKIGEYLVANSQHWYPEAQVMVRAIENMNKLVLNILVQHTINFQVYVEKSLRRTALIIAIKRILEDLEIDYTLLPQDVNLTGHK.

Residues 1 to 117 form a disordered region; the sequence is MAERRVSNGE…REENGGRSLR (117 aa). Residues 17 to 26 show a composition bias toward basic and acidic residues; the sequence is SDKEDSKDPR. Residues serine 28 and serine 36 each carry the phosphoserine modification. The segment covering 105–117 has biased composition (basic and acidic residues); the sequence is DSTREENGGRSLR. Phosphoserine is present on residues serine 142 and serine 145. Helical transmembrane passes span 180–200, 221–241, 261–281, 292–312, 524–544, and 559–579; these read AFLE…SLTI, MVTL…VFII, NVQV…LFDG, FLDF…LFLV, LITG…LDIA, and LAFM…FVFV.

This sequence belongs to the MscS (TC 1.A.23) family. As to expression, detected in the epidermis, cortex, and endodermis of the root tip.

Its subcellular location is the cell membrane. Its function is as follows. Mechanosensitive channel that opens in response to stretch forces in the membrane lipid bilayer. The protein is Mechanosensitive ion channel protein 9 (MSL9) of Arabidopsis thaliana (Mouse-ear cress).